The chain runs to 411 residues: MSKDALNLAQMQEQTLQLEQQSKLKQLVNEDLRKQEESVQKHHQTFLESIRAAGTLFGEGFRAFVTDRDKVTATVAGLTLLAVGVYSAKNATAVTGRYIEARLGKPSLVRETSRITVLEALRHPIQQVSRRLLSRPQDVLEGVVLSPSLEARVRDIAIMTRNIKKNRGLYRHILLYGPPGTGKTLFAKKLALHSGMDYAIMTGGDVAPMGREGVTAMHKLFDWANTSRRGLLLFVDEADAFLRKRATEKISEDLRATLNAFLYRTGQHSNKFMLILASCHPEQFDWAINACIDVMVHFDLPGQEERARLVRMYLNEYVLKPATEGKRRLKLAQFDYGRKCLEIARLTEGMSCRKIAQLAVSWQATAYASKDGVLTEAMMDACVQDFVQQHQQMMRWLKGERPGPEDEQPSS.

177–184 is a binding site for ATP; that stretch reads GPPGTGKT.

It belongs to the AAA ATPase family.

In Homo sapiens (Human), this protein is ATPase family AAA domain-containing protein 3C (ATAD3C).